Reading from the N-terminus, the 69-residue chain is Large ribosomal subunit protein uL29 (69 aa).

The protein belongs to the universal ribosomal protein uL29 family.

The protein is Large ribosomal subunit protein uL29 of Sulfolobus acidocaldarius (strain ATCC 33909 / DSM 639 / JCM 8929 / NBRC 15157 / NCIMB 11770).